The primary structure comprises 380 residues: Shedu protein SduA (380 aa).

Its function is as follows. Only component of antiviral defense system Shedu. Expression of Shedu in B.subtilis (strain BEST7003) confers resistance to phages phi105, phi29, rho14 and to a lesser extent to SPP1. May be an endonuclease. This Bacillus cereus (strain B4264) protein is Shedu protein SduA.